The sequence spans 281 residues: NADPH-dependent 7-cyano-7-deazaguanine reductase (281 aa).

Position 88 to 90 (88 to 90) interacts with substrate; that stretch reads VES. 90–91 lines the NADPH pocket; it reads SK. The active-site Thioimide intermediate is the cysteine 189. Residue aspartate 196 is the Proton donor of the active site. 228 to 229 is a substrate binding site; the sequence is HE. 257-258 serves as a coordination point for NADPH; sequence RG.

Belongs to the GTP cyclohydrolase I family. QueF type 2 subfamily. In terms of assembly, homodimer.

The protein localises to the cytoplasm. The enzyme catalyses 7-aminomethyl-7-carbaguanine + 2 NADP(+) = 7-cyano-7-deazaguanine + 2 NADPH + 3 H(+). It participates in tRNA modification; tRNA-queuosine biosynthesis. Its function is as follows. Catalyzes the NADPH-dependent reduction of 7-cyano-7-deazaguanine (preQ0) to 7-aminomethyl-7-deazaguanine (preQ1). This Cronobacter sakazakii (strain ATCC BAA-894) (Enterobacter sakazakii) protein is NADPH-dependent 7-cyano-7-deazaguanine reductase.